Consider the following 763-residue polypeptide: Xaa-Pro dipeptidyl-peptidase (763 aa).

Residues S349, D469, and H499 each act as charge relay system in the active site.

The protein belongs to the peptidase S15 family. Homodimer.

Its subcellular location is the cytoplasm. The enzyme catalyses Hydrolyzes Xaa-Pro-|- bonds to release unblocked, N-terminal dipeptides from substrates including Ala-Pro-|-p-nitroanilide and (sequentially) Tyr-Pro-|-Phe-Pro-|-Gly-Pro-|-Ile.. In terms of biological role, removes N-terminal dipeptides sequentially from polypeptides having unsubstituted N-termini provided that the penultimate residue is proline. This Streptococcus macedonicus (Streptococcus gallolyticus macedonicus) protein is Xaa-Pro dipeptidyl-peptidase.